The sequence spans 274 residues: 4-diphosphocytidyl-2-C-methyl-D-erythritol kinase (274 aa).

The active site involves Lys7. Position 90-100 (90-100) interacts with ATP; that stretch reads PMGGGLGGGSS. Residue Asp132 is part of the active site.

This sequence belongs to the GHMP kinase family. IspE subfamily.

The enzyme catalyses 4-CDP-2-C-methyl-D-erythritol + ATP = 4-CDP-2-C-methyl-D-erythritol 2-phosphate + ADP + H(+). The protein operates within isoprenoid biosynthesis; isopentenyl diphosphate biosynthesis via DXP pathway; isopentenyl diphosphate from 1-deoxy-D-xylulose 5-phosphate: step 3/6. In terms of biological role, catalyzes the phosphorylation of the position 2 hydroxy group of 4-diphosphocytidyl-2C-methyl-D-erythritol. The chain is 4-diphosphocytidyl-2-C-methyl-D-erythritol kinase from Dechloromonas aromatica (strain RCB).